A 349-amino-acid chain; its full sequence is tRNA pseudouridine synthase D (349 aa).

Residue Phe26 coordinates substrate. The Nucleophile role is filled by Asp79. Position 128 (Asn128) interacts with substrate. In terms of domain architecture, TRUD spans 154-302; that stretch reads GVPNYFGSQR…VEGARRAILL (149 aa). Phe328 contacts substrate.

This sequence belongs to the pseudouridine synthase TruD family.

The enzyme catalyses uridine(13) in tRNA = pseudouridine(13) in tRNA. Its function is as follows. Responsible for synthesis of pseudouridine from uracil-13 in transfer RNAs. The polypeptide is tRNA pseudouridine synthase D (Yersinia enterocolitica serotype O:8 / biotype 1B (strain NCTC 13174 / 8081)).